The sequence spans 510 residues: MDSKYIQKTLSAITEQITKNAAVQKVLDNKFVKEHKYAAAAATVGLGVVAATTIVKAVNCEGKRYNYDAIPNLSFDDESIYDVATIGAGPSGSVLGYYLAREGRKVALLEKKVFPRDKYCGDAVATMAQDILREMGVMKELVDEDLGHFAQNGGFVSPNGNSFIGNSAKELKRDAKYNRGAVIAVKRIVLDEKVAKAAKRMGADLKENTTVENATFDRSTGVWTINCVDSEDNTKKIVYRARVLVCADGSPSNAARQLGYVHTEPNGICSRAYVKNNTTFRYDGVVFYPPSLLPGYCAIIREARDELNYLAYIIPGGKVTNDDLSKYHHQYMTEDPFISAALGPNPDIERMKAAPLRLGGIKKSYDDHLLIVGDAAGFIDPLTGEGIQYAMEGSRLASLALIQAFNERDLSHQSLKRYQDFWMAKFGHEFSMSMTMSLFLYRFPIVLDAAASLIEKRGSRFLAEWAAVMTGVKPKTWFLRPDVGPLIVLEIFGECFRRVFQGKKQIKKLD.

Residues 1–36 (MDSKYIQKTLSAITEQITKNAAVQKVLDNKFVKEHK) lie on the Cytoplasmic side of the membrane. Residues 37–55 (YAAAAATVGLGVVAATTIV) form a helical membrane-spanning segment. Residues 56–510 (KAVNCEGKRY…QGKKQIKKLD (455 aa)) are Extracellular-facing.

The protein resides in the membrane. Receptor for cmfA, that appears to mediate the G-independent cmfA signal transduction. In Dictyostelium discoideum (Social amoeba), this protein is Conditioned medium factor receptor 1 (cmfB).